Here is a 307-residue protein sequence, read N- to C-terminus: Cyclin-dependent kinase 5 activator 1 (307 aa).

The residue at position 8 (S8) is a Phosphoserine; by CDK5. The disordered stretch occupies residues 96-136 (STFAQPPPAQPPAPPANQLSGSQTGVSSSVKKAPHPSVTSA). The segment covering 100 to 110 (QPPPAQPPAPP) has biased composition (pro residues). Polar residues predominate over residues 112–125 (NQLSGSQTGVSSSV). A Phosphothreonine; by CDK5 modification is found at T138.

This sequence belongs to the cyclin-dependent kinase 5 activator family. Heterodimer composed of a catalytic subunit CDK5 and a regulatory subunit CDK5R1 (p25) and macromolecular complex composed of at least CDK5, CDK5R1 (p35) and CDK5RAP1 or CDK5RAP2 or CDK5RAP3. Only the heterodimer shows kinase activity. Interacts with EPHA4 and NGEF; may mediate the activation of NGEF by EPHA4. Interacts with RASGRF2. The complex p35/CDK5 interacts with CLOCK. In terms of processing, the p35 form is proteolytically cleaved by calpain, giving rise to the p25 form. P35 has a 5 to 10 fold shorter half-life compared to p25. The conversion results in deregulation of the CDK5 kinase: p25/CDK5 kinase displays an increased and altered tau phosphorylation in comparison to the p35/CDK5 kinase in vivo. Post-translationally, myristoylated. A proper myristoylation signal is essential for the proper distribution of p35. Phosphorylation at Ser-8 and Thr-138 by CDK5 prevents calpain-mediated proteolysis. In terms of processing, ubiquitinated, leading to its degradation: degradation of p35 by proteasome results in down-regulation of CDK5 activity. During this process, CDK5 phosphorylates p35 and induces its ubiquitination and subsequent degradation. Ubiquitinated by the CRL2(FEM1B) complex, which recognizes the -Gly-Leu-Asp-Arg C-degron at the C-terminus, leading to its degradation. As to expression, brain and neuron specific.

Its subcellular location is the cell membrane. The protein resides in the cell projection. It localises to the neuron projection. The protein localises to the nucleus. It is found in the cytoplasm. Its subcellular location is the perinuclear region. The protein resides in the perikaryon. Functionally, p35 is a neuron specific activator of CDK5. The complex p35/CDK5 is required for neurite outgrowth and cortical lamination. Involved in dendritic spine morphogenesis by mediating the EFNA1-EPHA4 signaling. Activator of TPKII. The complex p35/CDK5 participates in the regulation of the circadian clock by modulating the function of CLOCK protein: phosphorylates CLOCK at 'Thr-451' and 'Thr-461' and regulates the transcriptional activity of the CLOCK-BMAL1 heterodimer in association with altered stability and subcellular distribution. This is Cyclin-dependent kinase 5 activator 1 (CDK5R1) from Spermophilus citellus (European ground squirrel).